The following is a 248-amino-acid chain: PF03932 family protein CutC (248 aa).

It belongs to the CutC family. As to quaternary structure, homodimer.

It localises to the cytoplasm. The polypeptide is PF03932 family protein CutC (Salmonella newport (strain SL254)).